A 243-amino-acid polypeptide reads, in one-letter code: MSRPVRNRKVVDYSQFQESDDADEDYGRDSGPPAKKIRSSPREAKNKRRSGKNSQEDSEDSEEKDVKTKKDDSHSAEDSEDEKDDHKSVRQQRQAASKAASKQREMLLEDVGSEEEPEEDDEAPFQEKDSGSDEDFLMEDDDDSDYGSSKKKNKKMVKKSKPERKEKKMPKPRLKATVTPSPVKGKGKVGRPTASKTSKEKTPSPKEEDEEAESPPEKKTSASPPLEKSGDEGSEDEAASGED.

Residues 1–243 (MSRPVRNRKV…SEDEAASGED (243 aa)) form a disordered region. Y13 is subject to Phosphotyrosine. S14 and S19 each carry phosphoserine. Position 26 is a phosphotyrosine (Y26). Residues 35–51 (KKIRSSPREAKNKRRSG) show a composition bias toward basic residues. 6 positions are modified to phosphoserine: S54, S58, S61, S73, S75, and S79. The segment covering 64–77 (KDVKTKKDDSHSAE) has biased composition (basic and acidic residues). Over residues 91-100 (QQRQAASKAA) the composition is skewed to low complexity. Acidic residues predominate over residues 111–124 (VGSEEEPEEDDEAP). Phosphoserine occurs at positions 113, 130, 132, and 144. Residues 132 to 145 (SDEDFLMEDDDDSD) are compositionally biased toward acidic residues. Positions 149-174 (SKKKNKKMVKKSKPERKEKKMPKPRL) are enriched in basic residues. At T179 the chain carries Phosphothreonine. At S181 the chain carries Phosphoserine. The segment covering 197–206 (TSKEKTPSPK) has biased composition (basic and acidic residues). Position 202 is a phosphothreonine (T202). Phosphoserine occurs at positions 204, 214, 223, 229, 234, and 240. Positions 232–243 (EGSEDEAASGED) are enriched in acidic residues.

Does not interact with RAD51. Post-translationally, phosphorylated in an ATM-dependent manner in response to DNA damage. Phosphorylated by CDK1 and casein kinase.

The protein localises to the nucleus. The protein resides in the chromosome. Chromatin-associated protein involved in DNA repair by promoting homologous recombination (HR). Binds double-stranded DNA (dsDNA) and secondary DNA structures, such as D-loop structures, but with less affinity than RAD51AP1. This is Nuclear ubiquitous casein and cyclin-dependent kinase substrate 1 from Rattus norvegicus (Rat).